The following is a 683-amino-acid chain: Solute carrier organic anion transporter family member 2B1 (683 aa).

The segment at 1 to 30 (MPDRSTKTTMGTEDMHERKVSVEPQDSHQD) is disordered. The Cytoplasmic portion of the chain corresponds to 1–41 (MPDRSTKTTMGTEDMHERKVSVEPQDSHQDAQPRGMFHNIK). Positions 13–30 (EDMHERKVSVEPQDSHQD) are enriched in basic and acidic residues. Phosphoserine is present on S21. Residues 42–61 (FFVLCHSLLQLTQLMISGYL) form a helical membrane-spanning segment. Topologically, residues 62-80 (KSSISTVEKRFGLSSQISG) are extracellular. The chain crosses the membrane as a helical span at residues 81-101 (LLAAFNEVGNVSLILFVSYFG). Over 102-107 (SRVHRP) the chain is Cytoplasmic. A helical transmembrane segment spans residues 108 to 132 (RMIGYGALLVATAGLLMALPHFISE). The Extracellular portion of the chain corresponds to 133–177 (PYRYDHSSSDNRSLDFEASLCLPTTMAPASALSNGSCSSHTETKH). 2 N-linked (GlcNAc...) asparagine glycosylation sites follow: N143 and N166. Residues 178–207 (LTMVGIMFAAQTLLGIGGVPIQPFGISYID) form a helical membrane-spanning segment. Topologically, residues 208–226 (DFAHHSNSPLYIGILFGIT) are cytoplasmic. A helical transmembrane segment spans residues 227 to 247 (TMGPGLAYGLGSLMLRLYVDI). Over 248-265 (DRMPEGGINLTPKDPRWV) the chain is Extracellular. Residues 266-290 (GAWWLGFLISSGLVVLASSPYFFFP) traverse the membrane as a helical segment. Over 291 to 355 (REMPKEKHEF…VKVFPRVLLR (65 aa)) the chain is Cytoplasmic. 2 positions are modified to phosphoserine: S312 and S315. The helical transmembrane segment at 356 to 377 (NLRHPIFLLVVLSQVCTSSMVA) threads the bilayer. Residues 378–397 (GMATFLPKFLERQFSITASF) lie on the Extracellular side of the membrane. The helical transmembrane segment at 398-421 (ANMLLGCLTIPLVIVGIMMGGVLV) threads the bilayer. Over 422 to 425 (KRLH) the chain is Cytoplasmic. A helical membrane pass occupies residues 426-449 (LSPVQCSALCLLGSLLCLLFSVPL). The Extracellular segment spans residues 450-553 (FFIGCSTHQI…SACSRLVLPF (104 aa)). Positions 472–532 (PSLFPGCSEP…VFYTNCSCVA (61 aa)) constitute a Kazal-like domain. Intrachain disulfides connect C478-C509, C484-C505, and C493-C530. N-linked (GlcNAc...) asparagine glycans are attached at residues N527 and N534. A helical transmembrane segment spans residues 554–576 (IVLFSLGAGLASITHTPSFMLIL). Over 577–585 (RGVKKEDKT) the chain is Cytoplasmic. The helical transmembrane segment at 586–611 (LAVGMQFMLLRVLAWMPSPVIHGSAI) threads the bilayer. The Extracellular portion of the chain corresponds to 612–644 (DTTCVHWALTCGRRAVCRYYDHDLLRNRFIGLQ). The chain crosses the membrane as a helical span at residues 645-662 (FFFKSGSLVCFTLVLAIL). At 663–683 (RQQSREASTRTTVKSSELQQL) the chain is on the cytoplasmic side.

Belongs to the organo anion transporter (TC 2.A.60) family. In terms of tissue distribution, expressed in liver, kidney, small intestine mucosa, large intestine, brain, lung, spleen, stomach and heart.

Its subcellular location is the cell membrane. The protein resides in the basal cell membrane. It is found in the apical cell membrane. The enzyme catalyses dehydroepiandrosterone 3-sulfate(out) = dehydroepiandrosterone 3-sulfate(in). The catalysed reaction is estrone 3-sulfate(out) = estrone 3-sulfate(in). It carries out the reaction estrone 3-sulfate(out) + hydrogencarbonate(in) = estrone 3-sulfate(in) + hydrogencarbonate(out). It catalyses the reaction taurocholate(out) = taurocholate(in). The enzyme catalyses coproporphyrin III(out) = coproporphyrin III(in). The catalysed reaction is substance P(out) = substance P(in). It carries out the reaction pregnenolone sulfate(out) = pregnenolone sulfate(in). It catalyses the reaction prostaglandin E2(out) = prostaglandin E2(in). The enzyme catalyses prostaglandin D2(out) = prostaglandin D2(in). The catalysed reaction is L-thyroxine(out) = L-thyroxine(in). Its function is as follows. Mediates the Na(+)-independent transport of steroid sulfate conjugates such as estrone 3-sulfate (E1S), dehydroepiandrosterone sulfate (DHEA-S) and pregnenolone sulfate (PregS) and other specific organic anions. Responsible for the transport of E1S through the basal membrane of syncytiotrophoblast, highlighting a potential role in the placental absorption of fetal-derived sulfated steroids including DHEA-S. Also facilitates the uptake of sulfated steroids at the basal/sinusoidal membrane of hepatocytes, therefore accounting for the major part of organic anions clearance of liver. Mediates the intestinal uptake of sulfated steroids. Mediates the uptake of the neurosteroids DHEA-S and PregS into the endothelial cells of the blood-brain barrier as the first step to enter the brain. Also plays a role in the reuptake of neuropeptides such as substance P/TAC1 and vasoactive intestinal peptide/VIP released from retinal neurons. May act as a heme transporter that promotes cellular iron availability. Also transports heme by-product coproporphyrin III (CPIII), and may be involved in their hepatic disposition. Mediates the uptake of other substrates such as prostaglandins D2 (PGD2), E1 (PGE1) and E2 (PGE2), taurocholate, L-thyroxine, leukotriene C4 and thromboxane B2. May contribute to regulate the transport of organic compounds in testis across the blood-testis-barrier. Shows a pH-sensitive substrate specificity which may be ascribed to the protonation state of the binding site and leads to a stimulation of substrate transport in an acidic microenvironment. The exact transport mechanism has not been yet deciphered but most likely involves an anion exchange, coupling the cellular uptake of organic substrate with the efflux of an anionic compound. Hydrogencarbonate/HCO3(-) acts as a probable counteranion that exchanges for organic anions. Cytoplasmic glutamate may also act as counteranion in the placenta. An inwardly directed proton gradient has also been proposed as the driving force of E1S uptake with a (H(+):E1S) stoichiometry of (1:1). In Mus musculus (Mouse), this protein is Solute carrier organic anion transporter family member 2B1.